Reading from the N-terminus, the 688-residue chain is Glycine--tRNA ligase beta subunit (688 aa).

The protein belongs to the class-II aminoacyl-tRNA synthetase family. As to quaternary structure, tetramer of two alpha and two beta subunits.

The protein resides in the cytoplasm. It catalyses the reaction tRNA(Gly) + glycine + ATP = glycyl-tRNA(Gly) + AMP + diphosphate. The polypeptide is Glycine--tRNA ligase beta subunit (Histophilus somni (strain 2336) (Haemophilus somnus)).